The primary structure comprises 353 residues: Protein RecA (353 aa).

74-81 (GPESSGKT) provides a ligand contact to ATP.

It belongs to the RecA family.

It is found in the cytoplasm. Can catalyze the hydrolysis of ATP in the presence of single-stranded DNA, the ATP-dependent uptake of single-stranded DNA by duplex DNA, and the ATP-dependent hybridization of homologous single-stranded DNAs. It interacts with LexA causing its activation and leading to its autocatalytic cleavage. This is Protein RecA from Bordetella bronchiseptica (strain ATCC BAA-588 / NCTC 13252 / RB50) (Alcaligenes bronchisepticus).